The chain runs to 172 residues: Large ribosomal subunit protein uL5 (172 aa).

The protein belongs to the universal ribosomal protein uL5 family. As to quaternary structure, part of the 50S ribosomal subunit; contacts the 5S rRNA and probably tRNA. Forms a bridge to the 30S subunit in the 70S ribosome.

In terms of biological role, this is one of the proteins that bind and probably mediate the attachment of the 5S RNA into the large ribosomal subunit, where it forms part of the central protuberance. In the 70S ribosome it contacts protein S13 of the 30S subunit (bridge B1b), connecting the 2 subunits; this bridge is implicated in subunit movement. May contact the P site tRNA; the 5S rRNA and some of its associated proteins might help stabilize positioning of ribosome-bound tRNAs. The polypeptide is Large ribosomal subunit protein uL5 (Haloferax mediterranei (strain ATCC 33500 / DSM 1411 / JCM 8866 / NBRC 14739 / NCIMB 2177 / R-4) (Halobacterium mediterranei)).